A 407-amino-acid chain; its full sequence is MSNVYDILKERGYIKQLTHEEEIRELLGKEKISFYIGFDPTADSLHVGHFLQMMVMAHMQKAGHRPIALVGGGTGMIGDPTGKTDMRKMMTKEQIEHNCNCFKKQLAKIIDFSEDKAIMVNNADWLLNLNYIEFLREIGVHFSVNKMLTAECFKSRLEKGLSFLEFNYMLMQGYDFLELNRKYNCVMELGGDDQWSNILAGVDLIRRKESKSAYGMTFTLLTNSEGKKMGKTESGALWLDPEKTSPYEFYQYWRNVADADVEKCLRLITFLPMDEVRRLSSLEGAEINEAKKVLAFEVTKLIHGEEEAQKAKIAAEALFGGNAKDLGNMPTAYIDKNDLNNLLVDLLVKCEIFPSKSEARRLIKQGGLYLNDEKVTDMNLVVTEEHVTEDGIMIRRGKKNFNRIVVE.

Tyr-35 lines the L-tyrosine pocket. The short motif at 40 to 49 (PTADSLHVGH) is the 'HIGH' region element. L-tyrosine-binding residues include Tyr-168 and Gln-172. The short motif at 228-232 (KMGKT) is the 'KMSKS' region element. ATP is bound at residue Lys-231. Residues 341–405 (NLLVDLLVKC…RGKKNFNRIV (65 aa)) form the S4 RNA-binding domain.

The protein belongs to the class-I aminoacyl-tRNA synthetase family. TyrS type 1 subfamily. Homodimer.

The protein resides in the cytoplasm. The enzyme catalyses tRNA(Tyr) + L-tyrosine + ATP = L-tyrosyl-tRNA(Tyr) + AMP + diphosphate + H(+). In terms of biological role, catalyzes the attachment of tyrosine to tRNA(Tyr) in a two-step reaction: tyrosine is first activated by ATP to form Tyr-AMP and then transferred to the acceptor end of tRNA(Tyr). In Clostridium botulinum (strain Kyoto / Type A2), this protein is Tyrosine--tRNA ligase.